The following is a 252-amino-acid chain: Indole-3-glycerol phosphate synthase (252 aa).

This sequence belongs to the TrpC family.

The enzyme catalyses 1-(2-carboxyphenylamino)-1-deoxy-D-ribulose 5-phosphate + H(+) = (1S,2R)-1-C-(indol-3-yl)glycerol 3-phosphate + CO2 + H2O. The protein operates within amino-acid biosynthesis; L-tryptophan biosynthesis; L-tryptophan from chorismate: step 4/5. In Listeria welshimeri serovar 6b (strain ATCC 35897 / DSM 20650 / CCUG 15529 / CIP 8149 / NCTC 11857 / SLCC 5334 / V8), this protein is Indole-3-glycerol phosphate synthase.